Here is a 428-residue protein sequence, read N- to C-terminus: Kynureninase (428 aa).

Pyridoxal 5'-phosphate is bound by residues threonine 104, threonine 105, 132 to 135 (FPSD), aspartate 213, histidine 216, and tyrosine 238. Residue lysine 239 is modified to N6-(pyridoxal phosphate)lysine. Positions 267 and 295 each coordinate pyridoxal 5'-phosphate.

Belongs to the kynureninase family. In terms of assembly, homodimer. Requires pyridoxal 5'-phosphate as cofactor.

The catalysed reaction is L-kynurenine + H2O = anthranilate + L-alanine + H(+). It catalyses the reaction 3-hydroxy-L-kynurenine + H2O = 3-hydroxyanthranilate + L-alanine + H(+). The protein operates within amino-acid degradation; L-kynurenine degradation; L-alanine and anthranilate from L-kynurenine: step 1/1. It participates in cofactor biosynthesis; NAD(+) biosynthesis; quinolinate from L-kynurenine: step 2/3. Functionally, catalyzes the cleavage of L-kynurenine (L-Kyn) and L-3-hydroxykynurenine (L-3OHKyn) into anthranilic acid (AA) and 3-hydroxyanthranilic acid (3-OHAA), respectively. In Bacillus cereus (strain ATCC 10987 / NRS 248), this protein is Kynureninase.